The chain runs to 418 residues: Gamma-glutamyl phosphate reductase (418 aa).

This sequence belongs to the gamma-glutamyl phosphate reductase family.

It is found in the cytoplasm. It catalyses the reaction L-glutamate 5-semialdehyde + phosphate + NADP(+) = L-glutamyl 5-phosphate + NADPH + H(+). It participates in amino-acid biosynthesis; L-proline biosynthesis; L-glutamate 5-semialdehyde from L-glutamate: step 2/2. Functionally, catalyzes the NADPH-dependent reduction of L-glutamate 5-phosphate into L-glutamate 5-semialdehyde and phosphate. The product spontaneously undergoes cyclization to form 1-pyrroline-5-carboxylate. This is Gamma-glutamyl phosphate reductase from Chlorobium chlorochromatii (strain CaD3).